A 249-amino-acid chain; its full sequence is UDP-N-acetyl-D-mannosaminuronic acid transferase (249 aa).

It belongs to the glycosyltransferase 26 family.

The enzyme catalyses UDP-N-acetyl-alpha-D-mannosaminouronate + N-acetyl-alpha-D-glucosaminyl-di-trans,octa-cis-undecaprenyl diphosphate = beta-D-ManNAcA-(1-&gt;4)-alpha-D-GlcNAc-di-trans,octa-cis-undecaprenyl diphosphate + UDP + H(+). It functions in the pathway bacterial outer membrane biogenesis; enterobacterial common antigen biosynthesis. Functionally, catalyzes the synthesis of Und-PP-GlcNAc-ManNAcA (Lipid II), the second lipid-linked intermediate involved in enterobacterial common antigen (ECA) synthesis. The protein is UDP-N-acetyl-D-mannosaminuronic acid transferase of Pectobacterium atrosepticum (strain SCRI 1043 / ATCC BAA-672) (Erwinia carotovora subsp. atroseptica).